Reading from the N-terminus, the 211-residue chain is Lysozyme g (211 aa).

An N-terminal signal peptide occupies residues 1 to 26 (MLGKNDPMCLVLVLLGLTALLGICQG). 2 disulfides stabilise this stretch: Cys-30–Cys-86 and Cys-44–Cys-55. Residues Glu-99 and Asp-112 contribute to the active site.

This sequence belongs to the glycosyl hydrolase 23 family. Granulocyte compartment of myelomonocytic cells.

The protein localises to the secreted. It carries out the reaction Hydrolysis of (1-&gt;4)-beta-linkages between N-acetylmuramic acid and N-acetyl-D-glucosamine residues in a peptidoglycan and between N-acetyl-D-glucosamine residues in chitodextrins.. This is Lysozyme g from Gallus gallus (Chicken).